The primary structure comprises 151 residues: Mediator of RNA polymerase II transcription subunit 32 (151 aa).

Residues 128 to 151 (GVAPGSVHSSSTGFDSRFSEDSTQ) form a disordered region.

The protein belongs to the mediator complex subunit 32 family. In terms of assembly, oligomers. Component of the Mediator complex. Interacts with MED6. Interacts with GEBPL.

The protein resides in the nucleus. Its function is as follows. Component of the Mediator complex, a coactivator involved in the regulated transcription of nearly all RNA polymerase II-dependent genes. Mediator functions as a bridge to convey information from gene-specific regulatory proteins to the basal RNA polymerase II transcription machinery. The Mediator complex, having a compact conformation in its free form, is recruited to promoters by direct interactions with regulatory proteins and serves for the assembly of a functional pre-initiation complex with RNA polymerase II and the general transcription factors. In Arabidopsis thaliana (Mouse-ear cress), this protein is Mediator of RNA polymerase II transcription subunit 32 (MED32).